The primary structure comprises 705 residues: Glycine--tRNA ligase beta subunit (705 aa).

Belongs to the class-II aminoacyl-tRNA synthetase family. As to quaternary structure, tetramer of two alpha and two beta subunits.

It is found in the cytoplasm. The enzyme catalyses tRNA(Gly) + glycine + ATP = glycyl-tRNA(Gly) + AMP + diphosphate. The protein is Glycine--tRNA ligase beta subunit of Persephonella marina (strain DSM 14350 / EX-H1).